The primary structure comprises 150 residues: UPF0735 ACT domain-containing protein Helmi_18680 (150 aa).

Residues 72-147 (SVSLLLEHHP…GVRSAQLVGS (76 aa)) enclose the ACT domain.

It belongs to the UPF0735 family.

The chain is UPF0735 ACT domain-containing protein Helmi_18680 from Heliobacterium modesticaldum (strain ATCC 51547 / Ice1).